The chain runs to 20 residues: Antifungal protein J (20 aa).

The protein localises to the vacuole. In terms of biological role, inhibitor of serine proteases chymotrypsin, pepsin and trypsin. Has strong antifungal activity against the human pathogenic fungi C.albicans TIMM 1768, S.cerevisiae KCTC 7296 and T.beigelli KCTC 7707, but lacks antifungal activity against the plant pathogenic fungi C.gloeosporioides KACC 40003, C.coccodes KACC 40803 and D.bryoniae KACC 40669. Lacks hemolytic activity against human erythrocytes. In Solanum tuberosum (Potato), this protein is Antifungal protein J.